The sequence spans 566 residues: Liver carboxylesterase (566 aa).

The signal sequence occupies residues 1–18 (MWLLPLVLTSLASSATWA). Asn80 carries N-linked (GlcNAc...) asparagine glycosylation. A disulfide bridge links Cys88 with Cys117. Ser222 serves as the catalytic Acyl-ester intermediate. Cys274 and Cys285 are oxidised to a cystine. Residue Glu354 is the Charge relay system of the active site. Residue Ser379 is modified to Phosphoserine. The active-site Charge relay system is His467. The Prevents secretion from ER signature appears at 563 to 566 (HAEL).

The protein belongs to the type-B carboxylesterase/lipase family.

The protein localises to the endoplasmic reticulum lumen. The catalysed reaction is a carboxylic ester + H2O = an alcohol + a carboxylate + H(+). Its activity is regulated as follows. Activated by CHAPS at concentrations of up to 130 mM, higher concentrations reduce activity. In the presence of CHAPS, activity is stimulated by non-ionic detergents. Inhibited by the esterase inhibitors diisopropylfluorophosphate and phenylmethylsulfonyl fluoride. Functionally, involved in the detoxification of xenobiotics and in the activation of ester and amide prodrugs. Active towards triacylglycerides containing short-chain fatty acids from C2 to C6, and 1(3)-monoacylglycerols containing fatty acids from C2 to C12. Inactive on long-chain triacylglycerols and diacylglycerol. Hydrolyzes aromatic and alkyl esters and vitamin A acetate. The hydrolysis rate depends upon the amino acid promoiety and the esterification site of the prodrug. Aromatic promoieties are favored, highest rates are observed with phenylalanyl progdrugs, hydrolysis of valyl and isoleucyl prodrugs is less efficient. With floxuridine prodrugs, activity is higher on 5' monoesters than on 3' monoesters. With gemcitabine prodrugs, activity is higher on 3' monoesters than on 5' monoesters. This Sus scrofa (Pig) protein is Liver carboxylesterase.